The chain runs to 358 residues: DnaJ homolog subfamily B member 11 (358 aa).

The first 22 residues, 1 to 22, serve as a signal peptide directing secretion; the sequence is MAPQNLSTFCLLLLYLIGAVIA. The J domain occupies 25 to 90; that stretch reads DFYKILGVPR…EKRKQYDTYG (66 aa). T188 carries the post-translational modification Phosphothreonine. The N-linked (GlcNAc...) asparagine glycan is linked to N261.

As to quaternary structure, part of a large chaperone multiprotein complex comprising DNAJB11, HSP90B1, HSPA5, HYOU, PDIA2, PDIA4, PDIA6, PPIB, SDF2L1, UGGT1 and very small amounts of ERP29, but not, or at very low levels, CALR nor CANX. Binds to denatured substrates in an ATP-independent manner. Interacts via the J domain with HSPA5 in an ATP-dependent manner. Post-translationally, contains high-mannose Endo H-sensitive carbohydrates. Cys-169, Cys-171, Cys-193 and Cys-196 form intramolecular disulfide bonds. The preferential partner for each Cys is not known. In terms of processing, thr-188 was reported to be phosphorylated upon DNA damage by ATM or ATR; however as this position has been shown to be in the ER lumen, the in vivo relevance is not proven. Widely expressed.

Its subcellular location is the endoplasmic reticulum lumen. As a co-chaperone for HSPA5 it is required for proper folding, trafficking or degradation of proteins. Binds directly to both unfolded proteins that are substrates for ERAD and nascent unfolded peptide chains, but dissociates from the HSPA5-unfolded protein complex before folding is completed. May help recruiting HSPA5 and other chaperones to the substrate. Stimulates HSPA5 ATPase activity. It is necessary for maturation and correct trafficking of PKD1. This Homo sapiens (Human) protein is DnaJ homolog subfamily B member 11 (DNAJB11).